Here is a 128-residue protein sequence, read N- to C-terminus: Small ribosomal subunit protein uS9 (128 aa).

A compositionally biased stretch (basic and acidic residues) spans 97–113; sequence RSEGFMTRDPRSVERKK. Positions 97–128 are disordered; it reads RSEGFMTRDPRSVERKKPGQPKARRRFQFSKR. Positions 114–128 are enriched in basic residues; it reads PGQPKARRRFQFSKR.

It belongs to the universal ribosomal protein uS9 family.

The chain is Small ribosomal subunit protein uS9 from Bacteroides fragilis (strain ATCC 25285 / DSM 2151 / CCUG 4856 / JCM 11019 / LMG 10263 / NCTC 9343 / Onslow / VPI 2553 / EN-2).